A 98-amino-acid chain; its full sequence is MAEINRDDVAHLAQLAHIDMSESELDRMAGELAVIVDSVKSVSEIAGDDAPATSHPIPLSNVLREDTVGHVLSQEQVLSGAPDAEDGRFKVPAILEED.

A disordered region spans residues 76-98 (QVLSGAPDAEDGRFKVPAILEED).

This sequence belongs to the GatC family. In terms of assembly, heterotrimer of A, B and C subunits.

It catalyses the reaction L-glutamyl-tRNA(Gln) + L-glutamine + ATP + H2O = L-glutaminyl-tRNA(Gln) + L-glutamate + ADP + phosphate + H(+). The enzyme catalyses L-aspartyl-tRNA(Asn) + L-glutamine + ATP + H2O = L-asparaginyl-tRNA(Asn) + L-glutamate + ADP + phosphate + 2 H(+). Its function is as follows. Allows the formation of correctly charged Asn-tRNA(Asn) or Gln-tRNA(Gln) through the transamidation of misacylated Asp-tRNA(Asn) or Glu-tRNA(Gln) in organisms which lack either or both of asparaginyl-tRNA or glutaminyl-tRNA synthetases. The reaction takes place in the presence of glutamine and ATP through an activated phospho-Asp-tRNA(Asn) or phospho-Glu-tRNA(Gln). The protein is Aspartyl/glutamyl-tRNA(Asn/Gln) amidotransferase subunit C of Renibacterium salmoninarum (strain ATCC 33209 / DSM 20767 / JCM 11484 / NBRC 15589 / NCIMB 2235).